We begin with the raw amino-acid sequence, 102 residues long: ATP-dependent Clp protease adapter protein ClpS (102 aa).

The protein belongs to the ClpS family. In terms of assembly, binds to the N-terminal domain of the chaperone ClpA.

In terms of biological role, involved in the modulation of the specificity of the ClpAP-mediated ATP-dependent protein degradation. This chain is ATP-dependent Clp protease adapter protein ClpS, found in Dechloromonas aromatica (strain RCB).